Here is a 117-residue protein sequence, read N- to C-terminus: Large ribosomal subunit protein bL19 (117 aa).

The protein belongs to the bacterial ribosomal protein bL19 family.

Functionally, this protein is located at the 30S-50S ribosomal subunit interface and may play a role in the structure and function of the aminoacyl-tRNA binding site. This chain is Large ribosomal subunit protein bL19, found in Mycoplasmopsis pulmonis (strain UAB CTIP) (Mycoplasma pulmonis).